The following is a 271-amino-acid chain: Probable ribosomal RNA small subunit methyltransferase A (271 aa).

S-adenosyl-L-methionine is bound by residues His-19, Leu-21, Gly-46, Glu-67, Asp-92, and Asn-107.

Belongs to the class I-like SAM-binding methyltransferase superfamily. rRNA adenine N(6)-methyltransferase family. RsmA subfamily.

The protein localises to the cytoplasm. Its function is as follows. Specifically dimethylates two adjacent adenosines in the loop of a conserved hairpin near the 3'-end of 16S rRNA in the 30S particle. May play a critical role in biogenesis of 30S subunits. The protein is Probable ribosomal RNA small subunit methyltransferase A of Methanosarcina mazei (strain ATCC BAA-159 / DSM 3647 / Goe1 / Go1 / JCM 11833 / OCM 88) (Methanosarcina frisia).